The primary structure comprises 109 residues: Red pigment-concentrating prohormone (109 aa).

Positions 1 to 25 (MVRRSGVTLLVVALLVVTLMSSVSA) are cleaved as a signal peptide. Glutamine 26 is modified (pyrrolidone carboxylic acid). Tryptophan 33 is subject to Tryptophan amide. Residues 34-78 (GKRAAGASGSNGGVGEAVSGLHPSVGGAPGGVVPPGSSSPGDSCG) form a disordered region. 2 stretches are compositionally biased toward low complexity: residues 49 to 59 (EAVSGLHPSVG) and 67 to 78 (PPGSSSPGDSCG).

This sequence belongs to the AKH/HRTH/RPCH family.

It localises to the secreted. This hormone adapts the animal to light backgrounds by stimulating concentration of the pigment of its red body-chromatophores. This chain is Red pigment-concentrating prohormone, found in Callinectes sapidus (Blue crab).